The chain runs to 386 residues: Leupaxin (386 aa).

N-acetylmethionine is present on M1. The short motif at 3–15 is the LD motif 1 element; the sequence is ELDALLEELERST. The disordered stretch occupies residues 12–51; the sequence is ERSTLQDSDEYSNSAPLPLDQSSRKESNLDETSKMLSVQD. Residues 16–26 show a composition bias toward polar residues; that stretch reads LQDSDEYSNSA. S19 is subject to Phosphoserine. The residue at position 22 (Y22) is a Phosphotyrosine. Basic and acidic residues predominate over residues 33–44; the sequence is SSRKESNLDETS. Y62 bears the Phosphotyrosine mark. 2 short sequence motifs (LD motif) span residues 70 to 82 and 92 to 103; these read NVYS…KKSP and QLDELMAHLSEM. At Y72 the chain carries Phosphotyrosine; by LYN. A Phosphoserine modification is found at S81. LIM zinc-binding domains follow at residues 150–209, 210–267, 268–327, and 328–386; these read GHCA…LFSP, RCAY…AMFS, PKCG…RRGT, and LCHG…LFSL.

The protein belongs to the paxillin family. As to quaternary structure, interacts with unphosphorylated ITGA4. Interacts with AR and SRF. Interacts with PTK2B/PYK2, PTPN22 and PTPN12. Interacts (via LD motif 3) with LYN and the interaction is induced upon B-cell antigen receptor (BCR) activation. Interacts (via LD motif 3) with PTK2/FAK. Post-translationally, phosphorylated on tyrosine residues. Phosphorylation on Tyr-72 is important for its inhibitory function. Bombesin stimulates phosphorylation on Tyr-22, Tyr-62 and Tyr-72.

Its subcellular location is the cytoplasm. The protein resides in the cell junction. It is found in the focal adhesion. The protein localises to the nucleus. It localises to the perinuclear region. Its subcellular location is the cell projection. The protein resides in the podosome. It is found in the cell membrane. Transcriptional coactivator for androgen receptor (AR) and serum response factor (SRF). Contributes to the regulation of cell adhesion, spreading and cell migration and acts as a negative regulator in integrin-mediated cell adhesion events. Suppresses the integrin-induced tyrosine phosphorylation of paxillin (PXN). May play a critical role as an adapter protein in the formation of the adhesion zone in osteoclasts. Negatively regulates B-cell antigen receptor (BCR) signaling. The sequence is that of Leupaxin (LPXN) from Oryctolagus cuniculus (Rabbit).